A 120-amino-acid chain; its full sequence is Seminal plasma protein HSP-1 (120 aa).

2 repeat units span residues 1-13 and 16-28. The 2 X approximate repeats stretch occupies residues 1-28; that stretch reads DLQTTGADHSATVNPDQQLIMTKHSATV. O-linked (GalNAc...) threonine glycans are attached at residues Thr5, Thr12, Thr22, and Thr27. Fibronectin type-II domains lie at 29–73 and 74–120; these read TPEN…YCAA and TDYA…WKYC. Disulfide bonds link Cys34-Cys58, Cys48-Cys71, Cys79-Cys105, and Cys93-Cys120.

Belongs to the seminal plasma protein family. One glycoform exists as a monomer while the other forms a heterotetramer with HSP-2 and binds heparin. Post-translationally, O-glycosylated on Thr. There are two forms of HSP-1 which probably differ in the amount of sialylation of polysaccharide. In terms of tissue distribution, major component of seminal plasma.

The protein localises to the secreted. Its function is as follows. Could enhance the fertilizing capacity of spermatozoa upon interaction with heparin-like glycosaminoglycans present in the female genital tract. The protein is Seminal plasma protein HSP-1 of Equus caballus (Horse).